A 209-amino-acid polypeptide reads, in one-letter code: Probable nicotinate-nucleotide adenylyltransferase (209 aa).

Belongs to the NadD family.

The enzyme catalyses nicotinate beta-D-ribonucleotide + ATP + H(+) = deamido-NAD(+) + diphosphate. It functions in the pathway cofactor biosynthesis; NAD(+) biosynthesis; deamido-NAD(+) from nicotinate D-ribonucleotide: step 1/1. Catalyzes the reversible adenylation of nicotinate mononucleotide (NaMN) to nicotinic acid adenine dinucleotide (NaAD). This chain is Probable nicotinate-nucleotide adenylyltransferase, found in Hydrogenovibrio crunogenus (strain DSM 25203 / XCL-2) (Thiomicrospira crunogena).